Consider the following 350-residue polypeptide: Histidinol-phosphate aminotransferase 1 (350 aa).

K210 carries the N6-(pyridoxal phosphate)lysine modification.

It belongs to the class-II pyridoxal-phosphate-dependent aminotransferase family. Histidinol-phosphate aminotransferase subfamily. Homodimer. The cofactor is pyridoxal 5'-phosphate.

The catalysed reaction is L-histidinol phosphate + 2-oxoglutarate = 3-(imidazol-4-yl)-2-oxopropyl phosphate + L-glutamate. It functions in the pathway amino-acid biosynthesis; L-histidine biosynthesis; L-histidine from 5-phospho-alpha-D-ribose 1-diphosphate: step 7/9. This is Histidinol-phosphate aminotransferase 1 from Pseudomonas fluorescens (strain ATCC BAA-477 / NRRL B-23932 / Pf-5).